We begin with the raw amino-acid sequence, 421 residues long: Exoskeleton protein RP43 (421 aa).

The N-terminal stretch at 1–24 (MRVIFVISLVSFMFVTWQTNPVHC) is a signal peptide. Disulfide bonds link Cys72–Cys104, Cys132–Cys154, Cys193–Cys219, Cys247–Cys269, Cys309–Cys335, and Cys362–Cys384. CUB domains are found at residues 72 to 191 (CSKP…YSIV), 193 to 306 (CNSL…YSVP), and 309 to 421 (CSVV…YTTG).

As to expression, detected in vestimentum and trunk but not in opisthosome or obturaculum. In the vestimentum, expression is restricted to epithelial cells under apical cuticular plaques.

In terms of biological role, may play a role in protein-protein interactions during tube assembly. The sequence is that of Exoskeleton protein RP43 from Riftia pachyptila (Vent tube worm).